Reading from the N-terminus, the 550-residue chain is Alkaline phosphatase PhoV (550 aa).

The signal sequence occupies residues 1–20 (MKIKLLCISLAVLFCSSANA). Residues Asp48 and Thr89 each coordinate Zn(2+). The active-site Phosphothreonine intermediate is the Thr89. Substrate-binding positions include Asn110 and 171–173 (KDR). Residues Asp313, His317, Asp360, His361, and His491 each contribute to the Zn(2+) site.

It depends on Zn(2+) as a cofactor.

The protein resides in the cell inner membrane. The catalysed reaction is a phosphate monoester + H2O = an alcohol + phosphate. Subject to competitive inhibition by phosphate. Inhibited by manganese. Magnesium mildly increases enzyme activity when the zinc concentration is suboptimal. Optimal activity is dependent on the presence of 0.01-2% Triton X-100. Triton X-100 at a concentration of 0.05% increases the activity about fivefold relative to that in its absence. The enzyme is even active in Triton X-100 concentrations up to 80%. 50% inhibition by 4 mM EDTA and 50% inhibition by 48 mM sodium citrate. Alkaline phosphatase with broad substrate specificity. This chain is Alkaline phosphatase PhoV, found in Synechococcus elongatus (strain ATCC 33912 / PCC 7942 / FACHB-805) (Anacystis nidulans R2).